A 252-amino-acid polypeptide reads, in one-letter code: 5'-nucleotidase SurE (252 aa).

A divalent metal cation contacts are provided by Asp-8, Asp-9, Ser-39, and Asn-91.

The protein belongs to the SurE nucleotidase family. The cofactor is a divalent metal cation.

The protein resides in the cytoplasm. The enzyme catalyses a ribonucleoside 5'-phosphate + H2O = a ribonucleoside + phosphate. Functionally, nucleotidase that shows phosphatase activity on nucleoside 5'-monophosphates. The polypeptide is 5'-nucleotidase SurE (Paraburkholderia xenovorans (strain LB400)).